The following is a 280-amino-acid chain: ESX-1 secretion-associated protein EspJ (280 aa).

Ser-70 is modified (phosphoserine). Low complexity-rich tracts occupy residues 167–181 (QTISQTAQQAAQSAQ) and 246–280 (PAQAMDTGAGARPAASPLAAPVDPSTPAPSTTTTL). The segment at 167–280 (QTISQTAQQA…TPAPSTTTTL (114 aa)) is disordered.

As to quaternary structure, residues 76-280 interact with EsxB and an artificial EsxB-EsxA heterodimer. Phosphorylated at Ser-70.

The protein resides in the secreted. In terms of biological role, could be involved in regulation of growth and intracellular survival. This chain is ESX-1 secretion-associated protein EspJ, found in Mycobacterium tuberculosis (strain ATCC 25618 / H37Rv).